Reading from the N-terminus, the 414-residue chain is Esterase FrsA (414 aa).

Belongs to the FrsA family.

It carries out the reaction a carboxylic ester + H2O = an alcohol + a carboxylate + H(+). In terms of biological role, catalyzes the hydrolysis of esters. In Escherichia coli O157:H7, this protein is Esterase FrsA.